The sequence spans 530 residues: MAAKHVLFSTDARQKMLSGVNLLANAVKVTLGPKGRHVVLNKSYGAPTITKDGVSVAKEIELADKFENMGAQMLKQVASKANDEAGDGTTTATVLAQALINEGMKAVAAGMNPMDLKRGIDKAVSAAVEKLHQLAKPCSDTQSITQVGAISANSDHAIGEIIAQAMEKVGRNGVITVEEGQALQNELSVVEGMQFDRGYLSPYFINQPKAGCVELENPYVLLVDKKISHIRELLPILESVAKASRSLLIIAEDVDGDALATLVVNSMRGIIKVAAVKAPGFGEQRKAMLEDIAALTAGRVISEEIGLELEKVTLDDLGSAKKVTINKDNTTIVDGAAEPSALQDRIAQIQHQLEHTTSQYDRDKLQQRIAKLSGGVAVIKIGAATEVEMKEKKDRVDDALHATRAAVEEGIVAGGGVALLKIANELSNLQGDNDDQNVGIRIALRAMEEPLRQIAINAGDEASVIANQVKTGDEHYGYNAATGQFGNMLEMGILDPAKVTRSALQFAASIAGLMITTEAMVSEVDKESAA.

Residues 30-33 (TLGP), lysine 51, 87-91 (DGTTT), glycine 415, 479-481 (NAA), and aspartate 495 each bind ATP.

It belongs to the chaperonin (HSP60) family. In terms of assembly, forms a cylinder of 14 subunits composed of two heptameric rings stacked back-to-back. Interacts with the co-chaperonin GroES.

It is found in the cytoplasm. It carries out the reaction ATP + H2O + a folded polypeptide = ADP + phosphate + an unfolded polypeptide.. Its function is as follows. Together with its co-chaperonin GroES, plays an essential role in assisting protein folding. The GroEL-GroES system forms a nano-cage that allows encapsulation of the non-native substrate proteins and provides a physical environment optimized to promote and accelerate protein folding. This Vibrio cholerae serotype O1 (strain ATCC 39315 / El Tor Inaba N16961) protein is Chaperonin GroEL 2.